The chain runs to 327 residues: RING-H2 finger protein ATL34 (327 aa).

Residues 1–26 (MTIGKSPILLHHHVIFLLLLVLQVSG) form the signal peptide. A helical membrane pass occupies residues 47–67 (AVIIAMLMFTLLFSMLACCVC). An RING-type; atypical zinc finger spans residues 128-170 (CAICLNEFEDEETLRLMPPCSHAFHASCIDVWLSSRSTCPVCR). Positions 280–327 (LSHMKTLPQARSSREGYRSGSVGSERRGKGKEKEFGEGSFDRLKAEMV) are disordered. Positions 303 to 327 (SERRGKGKEKEFGEGSFDRLKAEMV) are enriched in basic and acidic residues.

Belongs to the RING-type zinc finger family. ATL subfamily.

It is found in the membrane. It catalyses the reaction S-ubiquitinyl-[E2 ubiquitin-conjugating enzyme]-L-cysteine + [acceptor protein]-L-lysine = [E2 ubiquitin-conjugating enzyme]-L-cysteine + N(6)-ubiquitinyl-[acceptor protein]-L-lysine.. It functions in the pathway protein modification; protein ubiquitination. This is RING-H2 finger protein ATL34 (ATL34) from Arabidopsis thaliana (Mouse-ear cress).